Reading from the N-terminus, the 432-residue chain is Adenylosuccinate synthetase (432 aa).

GTP contacts are provided by residues 13–19 (GDEGKGK) and 41–43 (GHT). Asp14 acts as the Proton acceptor in catalysis. The Mg(2+) site is built by Asp14 and Gly41. IMP is bound by residues 14–17 (DEGK), 39–42 (NAGH), Thr130, Arg144, Gln225, Thr240, and Arg304. His42 acts as the Proton donor in catalysis. 300–306 (ATTGRRR) serves as a coordination point for substrate. GTP-binding positions include Arg306, 332–334 (KLD), and 415–417 (STG).

This sequence belongs to the adenylosuccinate synthetase family. In terms of assembly, homodimer. It depends on Mg(2+) as a cofactor.

The protein localises to the cytoplasm. The enzyme catalyses IMP + L-aspartate + GTP = N(6)-(1,2-dicarboxyethyl)-AMP + GDP + phosphate + 2 H(+). Its pathway is purine metabolism; AMP biosynthesis via de novo pathway; AMP from IMP: step 1/2. Its function is as follows. Plays an important role in the de novo pathway of purine nucleotide biosynthesis. Catalyzes the first committed step in the biosynthesis of AMP from IMP. This chain is Adenylosuccinate synthetase, found in Baumannia cicadellinicola subsp. Homalodisca coagulata.